The chain runs to 498 residues: Cyclin-L1 (498 aa).

Cyclin-like stretches follow at residues E68–K169 and K182–K266. Residues L294–R498 form a disordered region. Residues N311 to S320 show a composition bias toward polar residues. Basic and acidic residues predominate over residues S321–N341. Residues K366–S396 are RS. The span at N367–H387 shows a compositional bias: basic residues. Residues S388–R402 are compositionally biased toward low complexity. 2 positions are modified to phosphoserine: S409 and S412. The segment covering R415–R426 has biased composition (basic and acidic residues). A compositionally biased stretch (basic residues) spans H427–S440. A compositionally biased stretch (basic and acidic residues) spans N441–H478. Basic residues predominate over residues G479 to R498.

This sequence belongs to the cyclin family. Cyclin L subfamily.

Its subcellular location is the nucleus speckle. The protein localises to the nucleus. It localises to the nucleoplasm. Its function is as follows. Involved in pre-mRNA splicing. The polypeptide is Cyclin-L1 (ccnl1) (Danio rerio (Zebrafish)).